The primary structure comprises 413 residues: L-cysteine:1D-myo-inositol 2-amino-2-deoxy-alpha-D-glucopyranoside ligase (413 aa).

The segment at 1–21 (MQSWSDTALPSVPGQGPPLRL) is disordered. Cys43 provides a ligand contact to Zn(2+). L-cysteinyl-5'-AMP is bound by residues 43-46 (CGIT), Thr58, and 81-83 (NVT). Residues 45 to 55 (ITPYDATHLGH) carry the 'HIGH' region motif. Positions 187–192 (ERGGDP) match the 'ERGGDP' region motif. Trp227 contributes to the L-cysteinyl-5'-AMP binding site. Cys231 is a Zn(2+) binding site. 249–251 (GSD) contributes to the L-cysteinyl-5'-AMP binding site. His256 provides a ligand contact to Zn(2+). Ile283 is an L-cysteinyl-5'-AMP binding site. The short motif at 289-293 (KMSKS) is the 'KMSKS' region element.

It belongs to the class-I aminoacyl-tRNA synthetase family. MshC subfamily. In terms of assembly, monomer. Requires Zn(2+) as cofactor.

It carries out the reaction 1D-myo-inositol 2-amino-2-deoxy-alpha-D-glucopyranoside + L-cysteine + ATP = 1D-myo-inositol 2-(L-cysteinylamino)-2-deoxy-alpha-D-glucopyranoside + AMP + diphosphate + H(+). Functionally, catalyzes the ATP-dependent condensation of GlcN-Ins and L-cysteine to form L-Cys-GlcN-Ins. This Rhodococcus erythropolis (strain PR4 / NBRC 100887) protein is L-cysteine:1D-myo-inositol 2-amino-2-deoxy-alpha-D-glucopyranoside ligase.